Consider the following 113-residue polypeptide: U11-theraphotoxin-Hhn1a (113 aa).

The signal sequence occupies residues 1 to 21 (MNTVRATFLLVFVLAVSLGQA). The propeptide occupies 22-74 (DKDENRMEMQEKTEQGKSYLDFAENLLLQKLEELEAKLLEEDSEESRNSRQKR). The segment covering 60–69 (LEEDSEESRN) has biased composition (basic and acidic residues). The tract at residues 60–82 (LEEDSEESRNSRQKRCIGEGVPC) is disordered. Cystine bridges form between Cys75-Cys90, Cys82-Cys95, and Cys89-Cys110.

The protein belongs to the neurotoxin 14 (magi-1) family. 01 (HNTX-16) subfamily. As to expression, expressed by the venom gland.

The protein resides in the secreted. Its function is as follows. Probable ion channel inhibitor. The polypeptide is U11-theraphotoxin-Hhn1a (Cyriopagopus hainanus (Chinese bird spider)).